The following is a 123-amino-acid chain: Small ribosomal subunit protein uS12 (123 aa).

A 3-methylthioaspartic acid modification is found at D89. Positions 104–123 (TQGVKDRRQRRSKYGAKRPK) are disordered. A compositionally biased stretch (basic residues) spans 110–123 (RRQRRSKYGAKRPK).

It belongs to the universal ribosomal protein uS12 family. As to quaternary structure, part of the 30S ribosomal subunit. Contacts proteins S8 and S17. May interact with IF1 in the 30S initiation complex.

Functionally, with S4 and S5 plays an important role in translational accuracy. Its function is as follows. Interacts with and stabilizes bases of the 16S rRNA that are involved in tRNA selection in the A site and with the mRNA backbone. Located at the interface of the 30S and 50S subunits, it traverses the body of the 30S subunit contacting proteins on the other side and probably holding the rRNA structure together. The combined cluster of proteins S8, S12 and S17 appears to hold together the shoulder and platform of the 30S subunit. This chain is Small ribosomal subunit protein uS12, found in Parvibaculum lavamentivorans (strain DS-1 / DSM 13023 / NCIMB 13966).